Reading from the N-terminus, the 224-residue chain is Menaquinol:cytochrome c reductase cytochrome b subunit (224 aa).

Residues 37–57 form a helical membrane-spanning segment; the sequence is FSAFVYCFGGLTFFVTVIQVL. Tyr42 lines the heme b pocket. Cys43 contacts heme c. Residues Arg91, His94, His108, and Arg111 each contribute to the heme b site. Transmembrane regions (helical) follow at residues 96–116, 126–146, and 195–215; these read WGASLVIVMMFLHTLRVFFQG, WIVGVLIFFVMLGLGFTGYLL, and IHVFFLPAALFGLMAAHFIMI. Heme b-binding residues include His196 and His211. 2 residues coordinate heme c: Arg216 and Ile220. Residue Ser221 coordinates heme b.

Belongs to the cytochrome b family. The main subunits of the menaquinol:cytochrome c complex are a Rieske-type iron-sulfur protein (QcrA), a cytochrome b (QcrB) and a cytochrome c (QcrC). Heme b serves as cofactor. Requires heme c as cofactor.

It is found in the cell membrane. In terms of biological role, component of the menaquinol:cytochrome c reductase complex. In Bacillus subtilis (strain 168), this protein is Menaquinol:cytochrome c reductase cytochrome b subunit.